A 301-amino-acid polypeptide reads, in one-letter code: Homoserine O-acetyltransferase (301 aa).

C142 functions as the Acyl-thioester intermediate in the catalytic mechanism. K163 and S192 together coordinate substrate. H235 acts as the Proton acceptor in catalysis. E237 is an active-site residue. A substrate-binding site is contributed by R249.

This sequence belongs to the MetA family.

Its subcellular location is the cytoplasm. The catalysed reaction is L-homoserine + acetyl-CoA = O-acetyl-L-homoserine + CoA. It functions in the pathway amino-acid biosynthesis; L-methionine biosynthesis via de novo pathway; O-acetyl-L-homoserine from L-homoserine: step 1/1. Functionally, transfers an acetyl group from acetyl-CoA to L-homoserine, forming acetyl-L-homoserine. The polypeptide is Homoserine O-acetyltransferase (Bacillus thuringiensis subsp. konkukian (strain 97-27)).